The sequence spans 382 residues: uncharacterized protein (382 aa).

A run of 12 helical transmembrane segments spans residues 8 to 28 (VMLLLCGLLLLTLAIAVLNTL), 45 to 65 (MVSSSYFTGNLVGTLFTGYLI), 75 to 95 (YLASLIFAAGCVGLGVMVGFW), 102 to 122 (FIAGIGCAMIWVVVESALMCS), 131 to 151 (LLAAYMMVYYMGTFLGQLLVS), 157 to 177 (LLHVLPWVTGMILAGILPLLF), 204 to 224 (LGVNGCIISGIVLGSLYGLMP), 231 to 251 (GMANASIGFWMAVLVSAGILG), 270 to 290 (VQVFVVILGSIAMLTQAAMAP), 291 to 311 (ALFILGAAGFTLYPVAMAWAC), 325 to 345 (ALLLSYTVGSLLGPSFAAMLM), and 349 to 369 (SDNLLFIMIASVSFIYLLMLL).

Belongs to the major facilitator superfamily. YcaD (TC 2.A.1.26) family.

The protein resides in the cell inner membrane. This is an uncharacterized protein from Salmonella paratyphi B (strain ATCC BAA-1250 / SPB7).